Reading from the N-terminus, the 105-residue chain is Ig lambda-1 chain C region (105 aa).

In terms of domain architecture, Ig-like spans 6-100 (PSVTLFPPSS…EGHTVEKSLS (95 aa)). The cysteines at positions 27 and 86 are disulfide-linked.

In Mus musculus (Mouse), this protein is Ig lambda-1 chain C region.